We begin with the raw amino-acid sequence, 417 residues long: Gamma-glutamyl phosphate reductase (417 aa).

It belongs to the gamma-glutamyl phosphate reductase family.

It localises to the cytoplasm. It carries out the reaction L-glutamate 5-semialdehyde + phosphate + NADP(+) = L-glutamyl 5-phosphate + NADPH + H(+). Its pathway is amino-acid biosynthesis; L-proline biosynthesis; L-glutamate 5-semialdehyde from L-glutamate: step 2/2. Catalyzes the NADPH-dependent reduction of L-glutamate 5-phosphate into L-glutamate 5-semialdehyde and phosphate. The product spontaneously undergoes cyclization to form 1-pyrroline-5-carboxylate. This is Gamma-glutamyl phosphate reductase from Polynucleobacter asymbioticus (strain DSM 18221 / CIP 109841 / QLW-P1DMWA-1) (Polynucleobacter necessarius subsp. asymbioticus).